A 458-amino-acid polypeptide reads, in one-letter code: MNKFAIVLAAGKGTRMKSALPKVLHQVAGKSMLAHVLKSVSEVEIAKNVVIVGHEADRVIATLPKGTQFVKQVEQLGTGHAVRIAADLLANEEGATLVIAGDTPLITGETLGALFDYHFAQKATATILTAIAPNPTGYGRIIRDEKDSVEKIVEQKDANAFEKSITEINTGTYIFDNKSLFKALTEITTDNAQGEYYLTDVIEIFKKVGQTIAAHILDDFDESLGVNDRVALSQAEATMRKRINHEHMVNGVTLIDPATTYIDSEVTIGAETVIEANVTIKGNTFIGKNVLITNGSRIENSEIHSNCEVRNSTVEESRMSVGSNVGPYAHLRPGTVLSEEVHVGNFVEIKGSTLGKGTKAGHLTYIGNATVGEKVNFGAGTITANFDGKNKFNTEIDDFAFIGSNSTIIAPLHIGKNALTAAGSVVTEDVPDEAVEIGRGKQVNKLGRAKKMPHYRGQ.

The pyrophosphorylase stretch occupies residues 1-229 (MNKFAIVLAA…FDESLGVNDR (229 aa)). UDP-N-acetyl-alpha-D-glucosamine-binding positions include 8–11 (LAAG), lysine 22, glutamine 72, and 77–78 (GT). Aspartate 102 is a binding site for Mg(2+). 4 residues coordinate UDP-N-acetyl-alpha-D-glucosamine: glycine 139, glutamate 154, asparagine 169, and asparagine 227. Mg(2+) is bound at residue asparagine 227. The linker stretch occupies residues 230–250 (VALSQAEATMRKRINHEHMVN). The N-acetyltransferase stretch occupies residues 251-458 (GVTLIDPATT…AKKMPHYRGQ (208 aa)). UDP-N-acetyl-alpha-D-glucosamine-binding residues include arginine 332 and lysine 350. Histidine 362 functions as the Proton acceptor in the catalytic mechanism. 2 residues coordinate UDP-N-acetyl-alpha-D-glucosamine: tyrosine 365 and asparagine 376. Positions 379, 404, 422, and 439 each coordinate acetyl-CoA.

This sequence in the N-terminal section; belongs to the N-acetylglucosamine-1-phosphate uridyltransferase family. The protein in the C-terminal section; belongs to the transferase hexapeptide repeat family. As to quaternary structure, homotrimer. It depends on Mg(2+) as a cofactor.

Its subcellular location is the cytoplasm. The enzyme catalyses alpha-D-glucosamine 1-phosphate + acetyl-CoA = N-acetyl-alpha-D-glucosamine 1-phosphate + CoA + H(+). It catalyses the reaction N-acetyl-alpha-D-glucosamine 1-phosphate + UTP + H(+) = UDP-N-acetyl-alpha-D-glucosamine + diphosphate. The protein operates within nucleotide-sugar biosynthesis; UDP-N-acetyl-alpha-D-glucosamine biosynthesis; N-acetyl-alpha-D-glucosamine 1-phosphate from alpha-D-glucosamine 6-phosphate (route II): step 2/2. It participates in nucleotide-sugar biosynthesis; UDP-N-acetyl-alpha-D-glucosamine biosynthesis; UDP-N-acetyl-alpha-D-glucosamine from N-acetyl-alpha-D-glucosamine 1-phosphate: step 1/1. Its pathway is bacterial outer membrane biogenesis; LPS lipid A biosynthesis. Functionally, catalyzes the last two sequential reactions in the de novo biosynthetic pathway for UDP-N-acetylglucosamine (UDP-GlcNAc). The C-terminal domain catalyzes the transfer of acetyl group from acetyl coenzyme A to glucosamine-1-phosphate (GlcN-1-P) to produce N-acetylglucosamine-1-phosphate (GlcNAc-1-P), which is converted into UDP-GlcNAc by the transfer of uridine 5-monophosphate (from uridine 5-triphosphate), a reaction catalyzed by the N-terminal domain. The protein is Bifunctional protein GlmU of Lactococcus lactis subsp. cremoris (strain MG1363).